A 393-amino-acid polypeptide reads, in one-letter code: Meiotic driver wtf19 (393 aa).

The tract at residues 1–98 is disordered; it reads MKNKYYPLRS…SSGTADNSST (98 aa). Positions 11–29 are enriched in basic and acidic residues; it reads SMDELSAKNDNEIDLEKGP. 2 stretches are compositionally biased toward polar residues: residues 57–72 and 89–98; these read GANNPNLFNTDESTTP and SSGTADNSST. Transmembrane regions (helical) follow at residues 104-124, 137-157, 167-187, 208-228, 233-253, 269-289, 296-316, and 332-352; these read AFLSFISIFVLNVPAVCYLTY, WVYFAVWCASCLMIFISLWYF, VTVIFLAQCIKVTVVFLAQCV, CVKVTAVFLAQCVKVISIGLF, EMMIIIWLLWLIICCILFGCV, CTISAVLLLIVSSVCIPFWTF, LAKVFLLQSGIVLVLNGTMFL, and VLFIMGNVLFLCEMECPGALI.

It belongs to the WTF family. Homomer. Forms protein aggregates. The two isoforms can interact with each other and with themselves. High sequence similarity is required for their interaction.

Its subcellular location is the spore membrane. It is found in the vacuole membrane. The protein resides in the ascus epiplasm. The protein localises to the cytoplasm. It localises to the endoplasmic reticulum membrane. Its function is as follows. Promotes unequal transmission of alleles from the parental zygote to progeny spores by acting as poison/antidote system where the poison and antidote proteins are produced from the same locus; the poison component is trans-acting and targets all spores within an ascus whereas the antidote component is spore-specific, leading to poisoning of all progeny that do not inherit the allele. Functionally, localizes isoform 2 to the vacuole thereby facilitating its degradation. In terms of biological role, forms toxic aggregates that disrupt spore maturation. The polypeptide is Meiotic driver wtf19 (Schizosaccharomyces pombe (strain 972 / ATCC 24843) (Fission yeast)).